A 486-amino-acid chain; its full sequence is 6-phosphogluconate dehydrogenase, decarboxylating 2 (486 aa).

NADP(+) is bound by residues 12-17, 35-37, 79-81, and asparagine 107; these read GLAVMG, NRT, and VKA. Residues asparagine 107 and 133–135 each bind substrate; that span reads SGG. The Proton acceptor role is filled by lysine 188. Position 191–192 (191–192) interacts with substrate; the sequence is HN. Residue glutamate 195 is the Proton donor of the active site. Substrate is bound by residues tyrosine 196, lysine 266, arginine 293, arginine 456, and histidine 462. Residues 484–486 carry the Microbody targeting signal motif; sequence SKI.

This sequence belongs to the 6-phosphogluconate dehydrogenase family. As to quaternary structure, forms homodimer. Forms heterodimers with PGD1 or PGD3.

Its subcellular location is the cytoplasm. It is found in the cytosol. The protein resides in the peroxisome. The enzyme catalyses 6-phospho-D-gluconate + NADP(+) = D-ribulose 5-phosphate + CO2 + NADPH. It participates in carbohydrate degradation; pentose phosphate pathway; D-ribulose 5-phosphate from D-glucose 6-phosphate (oxidative stage): step 3/3. In terms of biological role, catalyzes the oxidative decarboxylation of 6-phosphogluconate to ribulose 5-phosphate and CO(2), with concomitant reduction of NADP to NADPH. Required for guided growth of the male gametophytes and interaction between the pollen tube and the ovule. The chain is 6-phosphogluconate dehydrogenase, decarboxylating 2 from Arabidopsis thaliana (Mouse-ear cress).